The primary structure comprises 393 residues: Succinate--CoA ligase [ADP-forming] subunit beta (393 aa).

The ATP-grasp domain maps to 9-237; that stretch reads RDLFAKHGVP…KDAANPLEAA (229 aa). ATP is bound by residues K45, 52–54, E92, P95, and E100; that span reads GRG. Mg(2+) contacts are provided by N192 and D206. Residues N257 and 319-321 each bind substrate; that span reads GIT.

The protein belongs to the succinate/malate CoA ligase beta subunit family. As to quaternary structure, heterotetramer of two alpha and two beta subunits. It depends on Mg(2+) as a cofactor.

The enzyme catalyses succinate + ATP + CoA = succinyl-CoA + ADP + phosphate. It carries out the reaction GTP + succinate + CoA = succinyl-CoA + GDP + phosphate. It participates in carbohydrate metabolism; tricarboxylic acid cycle; succinate from succinyl-CoA (ligase route): step 1/1. Its function is as follows. Succinyl-CoA synthetase functions in the citric acid cycle (TCA), coupling the hydrolysis of succinyl-CoA to the synthesis of either ATP or GTP and thus represents the only step of substrate-level phosphorylation in the TCA. The beta subunit provides nucleotide specificity of the enzyme and binds the substrate succinate, while the binding sites for coenzyme A and phosphate are found in the alpha subunit. The protein is Succinate--CoA ligase [ADP-forming] subunit beta of Streptomyces griseus subsp. griseus (strain JCM 4626 / CBS 651.72 / NBRC 13350 / KCC S-0626 / ISP 5235).